We begin with the raw amino-acid sequence, 241 residues long: Large ribosomal subunit protein uL3 (241 aa).

Disordered stretches follow at residues 140–162 (SHRSIGSTGGRQDPGKTFKNKKM) and 217–241 (PLPGKFRENGASAPATEAPAAEETA). Q151 carries the N5-methylglutamine modification. Residues 229 to 241 (APATEAPAAEETA) are compositionally biased toward low complexity.

It belongs to the universal ribosomal protein uL3 family. In terms of assembly, part of the 50S ribosomal subunit. Forms a cluster with proteins L14 and L19. Methylated by PrmB.

In terms of biological role, one of the primary rRNA binding proteins, it binds directly near the 3'-end of the 23S rRNA, where it nucleates assembly of the 50S subunit. In Methylobacterium radiotolerans (strain ATCC 27329 / DSM 1819 / JCM 2831 / NBRC 15690 / NCIMB 10815 / 0-1), this protein is Large ribosomal subunit protein uL3.